The following is a 3704-amino-acid chain: Fatty acid synthase 2 (3704 aa).

Residues 27 to 41 (AVSAHGSPPSSASPG) show a composition bias toward low complexity. A disordered region spans residues 27-52 (AVSAHGSPPSSASPGPDDKAFSVDGT). The segment at 216–475 (ALFGGQGNNH…QARIPFSKRK (260 aa)) is acetyltransferase (AT) domain. Positions 639-887 (SRLLGKPPIM…LIASTQGCSD (249 aa)) are enoyl reductase (ER) domain. Residues 1216–1709 (GEQPSWIRAL…VPGDQLSVQL (494 aa)) form a dehydratase (DH) domain region. Positions 1624–1730 (PKTNEPYSRA…VQIDASNQRG (107 aa)) constitute a MaoC-like domain. Residues 1747 to 2112 (YVFTGQGSQA…IEHVSEVTRS (366 aa)) are malonyl/palmitoyl transferase (MT/PT) domain. A Carrier domain is found at 2265–2343 (DERLDPLLTV…AALRPGYSGE (79 aa)). Position 2303 is an O-(pantetheine 4'-phosphoryl)serine (serine 2303). The segment at 2733–2969 (GLDVLLTGVG…LGLVEPEFAS (237 aa)) is ketoreductase (KR) domain. The region spanning 3176–3623 (QQEIELTHDL…QVGGIAMILH (448 aa)) is the Ketosynthase family 3 (KS3) domain. Catalysis depends on for beta-ketoacyl synthase activity residues cysteine 3359, histidine 3506, and histidine 3547.

It in the N-terminal section; belongs to the fungal fatty acid synthetase subunit beta family. This sequence in the C-terminal section; belongs to the thiolase-like superfamily. Fungal fatty acid synthetase subunit alpha family.

The protein operates within secondary metabolite biosynthesis. Its function is as follows. Fatty acid synthase; part of the gene cluster that mediates the biosynthesis of the glycolipid biosurfactant ustilagic acid (UA). UA is a secreted cellobiose glycolipid that is toxic for many microorganisms and confers biocontrol activity to U.maydis. UA consists of 15,16-dihydroxypalmitic or 2,15,16-trihydroxypalmitic acid, which is O-glycosidically linked to cellobiose at its terminal hydroxyl group. In addition, the cellobiose moiety is acetylated and acylated with a short-chain hydroxy fatty acid. UA biosynthesis starts with omega-hydroxylation of palmitic acid catalyzed by the cytochrome P450 monooxygenase cyp1. Terminal hydroxylation of palmitic acid precedes subterminal hydroxylation catalyzed by the cytochrome P450 monooxygenase cyp2. Sequential glucosylation of the hydroxy fatty acid is probably catalyzed by the glycosyltransferase ugt1. The cellobiose lipid is further decorated by acetylation of the proximal glucose residue and by acylation with a short-chain beta-hydroxy fatty acid at the distal glucose residue. The acyltransferase uat1 may be a good candidate for catalyzing either acetylation or acylation of the cellobiose lipid. The fatty acid synthase fas2 may be involved in synthesis of the carbon backbone of the short-chain beta-hydroxy fatty acid esterified to the cellobiose disaccharide. The secreted UA consists of a mixture of both alpha-hydroxylated and non-hydroxylated glycolipids; therefore, alpha-hydroxylation of the long-chain fatty, catalyzed by the fatty acid hydroxylase ahd1, occurs late in UA biosynthesis and may be the last step before secretion. This is Fatty acid synthase 2 from Mycosarcoma maydis (Corn smut fungus).